We begin with the raw amino-acid sequence, 2344 residues long: Peroxide stress-activated histidine kinase mak3 (2344 aa).

The region spanning 1-295 (MYSQHELRNK…GIVNDLEACL (295 aa)) is the Protein kinase domain. Phosphoserine occurs at positions 12, 16, and 17. A compositionally biased stretch (polar residues) spans 486–503 (SGNTRKTSLLGSNHSSYS). The tract at residues 486 to 506 (SGNTRKTSLLGSNHSSYSDKL) is disordered. 2 TPR repeats span residues 829-862 (CHYLHLAAEEALKIGANQEALDLYNRCIKMIPHE) and 1340-1373 (AFAFETVGSIFVSMELYTSATQYLEEAIRNYAAL). The 52-residue stretch at 1730–1781 (FELEIRIKRKDGVYRWNLTRCTPTTNEKNRTSFLCATIDIDDQKKARATALE) folds into the PAC domain. Positions 1792–2018 (NISHELRTPF…TFKICYDLKI (227 aa)) constitute a Histidine kinase domain. Position 1795 is a phosphohistidine; by autocatalysis (His-1795). Residues 2211-2333 (KILIAEDNPI…TLIKMLLQYL (123 aa)) form the Response regulatory domain. Position 2263 is a 4-aspartylphosphate (Asp-2263).

The protein localises to the cytoplasm. The catalysed reaction is ATP + protein L-histidine = ADP + protein N-phospho-L-histidine.. Functionally, involved in the control of the SAPK-dependent transcriptional response to peroxide stress. Regulates sty1 activity. This is Peroxide stress-activated histidine kinase mak3 (mak3) from Schizosaccharomyces pombe (strain 972 / ATCC 24843) (Fission yeast).